The sequence spans 211 residues: Orotate phosphoribosyltransferase (211 aa).

5-phospho-alpha-D-ribose 1-diphosphate is bound by residues R103, K107, H109, and 129–137 (EDLISTGKS). S133 serves as a coordination point for orotate.

Belongs to the purine/pyrimidine phosphoribosyltransferase family. PyrE subfamily. Homodimer. Requires Mg(2+) as cofactor.

The enzyme catalyses orotidine 5'-phosphate + diphosphate = orotate + 5-phospho-alpha-D-ribose 1-diphosphate. The protein operates within pyrimidine metabolism; UMP biosynthesis via de novo pathway; UMP from orotate: step 1/2. Its function is as follows. Catalyzes the transfer of a ribosyl phosphate group from 5-phosphoribose 1-diphosphate to orotate, leading to the formation of orotidine monophosphate (OMP). This Fusobacterium nucleatum subsp. nucleatum (strain ATCC 25586 / DSM 15643 / BCRC 10681 / CIP 101130 / JCM 8532 / KCTC 2640 / LMG 13131 / VPI 4355) protein is Orotate phosphoribosyltransferase.